The sequence spans 475 residues: MCGMVSATRWETAIEVTPWIAAIAEQVPLFGTDGIRGRVGEHLTAPLAQQVGFWTGQVLRQAGGDRGPVVVGQDSRNSSNMLAMALSSGLAAAGVEVLHLGLCPTPGVAYLTHHSEAIGGVMISASHNPPGDNGIKVFGADGSKLDRQLQAAIEAGLRGQQTSLPATTWGQHYYQPQLADHYQAAIAQSLGQRANLQGLKIVLDLAWGAAALLAPRLFRELGAEVIALHDLPDGNQINVNCGSTHLARLQAAVLEQGADMGFAFDGDADRVLAVDGRGRSVDGDHILFLWGRELEQQQQLPGQAIVTTVMANLGFERAWQAVGGEFVRTAVGDQYVQAEMQARGAMLGGEQSGHILCRHYALTGDGTLTAAHVAALVQASGVSLADLVDQSFRPYPQLLRNVRVEDRDRRCNWQNCAALTQAIAAAETDMGDRGRVLVRASGTEPLLRIMVEAEEAQQVEHWTTHLVQVAESHLL.

S126 (phosphoserine intermediate) is an active-site residue. S126, D265, D267, and D269 together coordinate Mg(2+). S126 is subject to Phosphoserine.

Belongs to the phosphohexose mutase family. Mg(2+) serves as cofactor. Post-translationally, activated by phosphorylation.

It catalyses the reaction alpha-D-glucosamine 1-phosphate = D-glucosamine 6-phosphate. In terms of biological role, catalyzes the conversion of glucosamine-6-phosphate to glucosamine-1-phosphate. In Synechococcus sp. (strain ATCC 27144 / PCC 6301 / SAUG 1402/1) (Anacystis nidulans), this protein is Phosphoglucosamine mutase.